A 913-amino-acid chain; its full sequence is Chitin synthase 1 (913 aa).

Positions 1–27 (MSGAPPPSSGFAPRSYGQQPLSHAPRS) are disordered. The UDP-N-acetyl-alpha-D-glucosamine site is built by T237, E241, and D291. N420 carries N-linked (GlcNAc...) asparagine glycosylation. D496 is a catalytic residue. Residue N510 is glycosylated (N-linked (GlcNAc...) asparagine). Transmembrane regions (helical) follow at residues 539-559 (WLNGAFFATLFSIWNWGRIYS), 581-601 (YTAFGFFLPANLYLALFFIVF), 625-645 (AVYIYNFSYLFGLLMLIIIGL), 658-678 (FVGAVFGLMMMLSSLVGAGIF), 684-704 (TVHSIVVSILTVGVYFIASAL), and 711-731 (IFMTFTHYTALIPSFVNIFTI). The Conserved SWG motif signature appears at 741–743 (SWG). 2 helical membrane-spanning segments follow: residues 800–820 (VLLTWAFSNLIFALFVVYFAS) and 825–845 (MPVLYIFVASLNTCRLLGSIG). Residues N867 and N900 are each glycosylated (N-linked (GlcNAc...) asparagine).

Belongs to the chitin synthase family. Class II subfamily. Homodimer. It depends on Mn(2+) as a cofactor.

The protein resides in the cell membrane. It catalyses the reaction [(1-&gt;4)-N-acetyl-beta-D-glucosaminyl](n) + UDP-N-acetyl-alpha-D-glucosamine = [(1-&gt;4)-N-acetyl-beta-D-glucosaminyl](n+1) + UDP + H(+). The activity is inhibited by nikkomycin Z (NikZ). Polymerizes chitin, a structural polymer of the cell wall and septum, by transferring the sugar moiety of UDP-GlcNAc to the non-reducing end of the growing chitin polymer. Involved in mycelial growth, sporangial production, zoospore release and pathogenesis. This is Chitin synthase 1 from Phytophthora sojae (strain P6497) (Soybean stem and root rot agent).